An 874-amino-acid polypeptide reads, in one-letter code: MSIPSILRKETLKKKDKNIDLQENNINDLVVSASRVIAPLWPISTFAAHHPWMGLEKQSFEQVANWLKEARNVDIYPSASMIHSAKAKGEIEESFLQIALSRWLDSQSFHMPRETAERFCQEALKLERLPSSLLSSPELNKLAEEINYVNTGSMKDSSMQPISSLIENQNGDNLSDILNYHIIKWCKLYLDDAGTSWAMPNREKGFYRAWQHLITFDPALSKTERKVLKDWPEDALIALTKALSELGISESNMQAYLEGHLLSLPGWAGMIRWRSQQSIEEQELLIEYLAVRLSMELAIVKPYLPLKNQKAEKKVSIVPLIASWIYWGDISIEKWLQMSATEQSELLAFAYRFDENTRKKLWLEAWEQTHAEQLREKIASKQRATNDKKRVVAQLAFCIDVRSEPFRRHLEKLGPFETFGIAGFFGLPIATTELGSNDSHPSLPVILKPKHQIKELTDENECKSYEQRKMVGSSVRYTFKTMKQNVLTSMLLPEVSGPLLGLQMVTRSFVPRRVGGFIRNLRKNMLQKPDTTFSLNHVHDTNCEIPIGFTKEEKVNYVRQALKMVGLTEGFAPLVVMCGHSSQSTNNPYAAALECGACGGAAGGFNARVFATLCNLPEVREALSAEGIKIPDDTIFAAAEHKTTVDELEWIYVPELSEIAQEAFDCIEAIMPNVSQHANRERLMQLPHFKTKIKNPSKEAHRFAEDWSEIRPEWGLARNASFIIGQRELTQECDLEGRAFLHNYDWKQDESGDILANIIAGPGTVAQWINLQYYASTVAPHYYGSGNKATQTVTAGLGVMQGNASDLLPGLPWQSVMQSDRETYHSPLRLLIVIQAPTKYIERLLNNNFTFREKVQNGWVRLASVDPEGRWKNW.

Residues C398, D400, H580, and C595 each contribute to the Zn(2+) site.

It belongs to the inorganic carbon transporter (TC 9.A.2) DabA family. Forms a complex with DabB. Zn(2+) serves as cofactor.

Its subcellular location is the cell membrane. Functionally, part of an energy-coupled inorganic carbon pump. This chain is Probable inorganic carbon transporter subunit DabA, found in Bacillus cereus (strain AH820).